The primary structure comprises 1807 residues: Nucleoporin nup189 (1807 aa).

Residues 1–118 (MFGQNNSSGF…SGGGLFGSNT (118 aa)) are disordered. GLFG repeat units lie at residues 26–29 (GLFG) and 66–69 (GLFG). Over residues 29–61 (GSNSNTPGNTLFGSQNTSTTGFGQNTTQPLFGS) the composition is skewed to polar residues. Residues 62–77 (NTNGGLFGNRNNTTTT) are compositionally biased toward low complexity. Gly residues predominate over residues 78–90 (GGTGFGMSSGTGM). Polar residues predominate over residues 93 to 108 (QSNTPAFGGTNNATNP). 10 GLFG repeats span residues 112-115 (GLFG), 152-155 (GLFG), 177-180 (GLFG), 308-311 (GLFG), 335-338 (GLFG), 350-353 (GLFG), 381-384 (GLFG), 399-402 (GLFG), 435-438 (GLFG), and 521-524 (GLFG). Residues 565-584 (PGTGLFGSTQTNNATSNTGT) show a composition bias toward polar residues. The segment at 565-685 (PGTGLFGSTQ…SSTTSQVAPT (121 aa)) is disordered. GLFG repeat units follow at residues 585 to 588 (GLFG), 611 to 614 (GLFG), 627 to 630 (GLFG), and 646 to 649 (GLFG). Residues 588–600 (GSNNANTTNTGGS) show a composition bias toward low complexity. The segment covering 603–644 (NKPSTTTGGLFGNTTAQQPSTTTSGLFGASNTNNQAQTSNFG) has biased composition (polar residues). Residues 653 to 663 (AGQQQQPLQAS) are compositionally biased toward low complexity. Residues 664 to 685 (IDQNPYGNNPLFSSTTSQVAPT) are compositionally biased toward polar residues. Residue serine 724 is modified to Phosphoserine. Residues 785–814 (QNGVKNGNDAKSDSKVQEKAPQNEADGSLK) are disordered. Residues 792–802 (NDAKSDSKVQE) show a composition bias toward basic and acidic residues. In terms of domain architecture, Peptidase S59 spans 822 to 963 (SDDYWMKPSI…GKWIFKVQHF (142 aa)). The disordered stretch occupies residues 974–1020 (EENDMSSTSNEAGNLKKYDQPNLKVSGKNDSFVTHHTPGAFPNDSKN). Residue serine 1051 is modified to Phosphoserine. The tract at residues 1082–1104 (KENNVPLSEDDLSNSSESSNESV) is disordered. Residues 1094–1104 (SNSSESSNESV) show a composition bias toward low complexity.

This sequence belongs to the nucleoporin GLFG family. Interacts (via G-L-F-G repeats) with rpn15/dss1. Interacts with raf1. As to quaternary structure, interacts with ned1. Nup189 is autocatalytically cleaved in nup98 and nup96.

The protein resides in the nucleus. It localises to the nuclear pore complex. In terms of biological role, functions as a component of the nuclear pore complex (NPC). NPC components, collectively referred to as nucleoporins (NUPs), can play the role of both NPC structural components and of docking or interaction partners for transiently associated nuclear transport factors. Active directional transport is assured by both, a Phe-Gly (FG) repeat affinity gradient for these transport factors across the NPC and a transport cofactor concentration gradient across the nuclear envelope. Nup189 is autocatalytically cleaved in vivo in 2 polypeptides which assume different functions in the NPC. Nup98 as one of the FG repeat nucleoporins participates in karyopherin interactions and contains part of the autocatalytic cleavage activity. Nup96 as part of the NUP84 complex is involved in nuclear poly(A)+ RNA and tRNA export. The sequence is that of Nucleoporin nup189 (nup189) from Schizosaccharomyces pombe (strain 972 / ATCC 24843) (Fission yeast).